The following is a 202-amino-acid chain: Cytochrome c oxidase assembly protein CtaG (202 aa).

At 1 to 13 the chain is on the cytoplasmic side; it reads MSDKAAAPKKQGR. Residues 14-36 traverse the membrane as a helical; Signal-anchor for type II membrane protein segment; the sequence is NNGAVVLMCLSFVFGMGAMSYAA. At 37–202 the chain is on the periplasmic side; sequence VPLYRIFCQV…GGAEKVEKKL (166 aa). A disordered region spans residues 183 to 202; the sequence is EGPKPLASNEGGAEKVEKKL.

This sequence belongs to the COX11/CtaG family.

It is found in the cell inner membrane. Its function is as follows. Exerts its effect at some terminal stage of cytochrome c oxidase synthesis, probably by being involved in the insertion of the copper B into subunit I. The polypeptide is Cytochrome c oxidase assembly protein CtaG (Rhizobium etli (strain CIAT 652)).